Reading from the N-terminus, the 72-residue chain is uncharacterized protein (72 aa).

The protein belongs to the asfivirus I73R family.

The protein localises to the virion. This is an uncharacterized protein from Ornithodoros (relapsing fever ticks).